A 170-amino-acid chain; its full sequence is RxLR effector protein PITG_07555 (170 aa).

A signal peptide spans 1–17 (MQAYHLLLVCMYISCSA). Positions 50–62 (RALRTHNPDREER) match the RxLR-dEER motif.

Belongs to the RxLR effector family.

Its subcellular location is the secreted. It localises to the host cytoplasm. The protein resides in the host nucleus. In terms of biological role, effector that enhances P.infestans colonization of Nicotiana benthamiana leaves. The protein is RxLR effector protein PITG_07555 of Phytophthora infestans (strain T30-4) (Potato late blight agent).